A 335-amino-acid chain; its full sequence is Meiotic expression up-regulated protein 14 (335 aa).

Its subcellular location is the cytoplasm. It is found in the cytoskeleton. It localises to the microtubule organizing center. The protein localises to the spindle pole body. The protein resides in the nucleus membrane. Its subcellular location is the prospore membrane. Has a role in nuclear division during meiosis II where it stabilizes the proper segregation of the spindle pole bodies. Also has a role in the formation and extension of the forespore membrane. This chain is Meiotic expression up-regulated protein 14 (meu14), found in Schizosaccharomyces pombe (strain 972 / ATCC 24843) (Fission yeast).